A 179-amino-acid chain; its full sequence is ATP synthase subunit delta (179 aa).

Belongs to the ATPase delta chain family. As to quaternary structure, F-type ATPases have 2 components, F(1) - the catalytic core - and F(0) - the membrane proton channel. F(1) has five subunits: alpha(3), beta(3), gamma(1), delta(1), epsilon(1). F(0) has three main subunits: a(1), b(2) and c(10-14). The alpha and beta chains form an alternating ring which encloses part of the gamma chain. F(1) is attached to F(0) by a central stalk formed by the gamma and epsilon chains, while a peripheral stalk is formed by the delta and b chains.

Its subcellular location is the cell membrane. Functionally, f(1)F(0) ATP synthase produces ATP from ADP in the presence of a proton or sodium gradient. F-type ATPases consist of two structural domains, F(1) containing the extramembraneous catalytic core and F(0) containing the membrane proton channel, linked together by a central stalk and a peripheral stalk. During catalysis, ATP synthesis in the catalytic domain of F(1) is coupled via a rotary mechanism of the central stalk subunits to proton translocation. Its function is as follows. This protein is part of the stalk that links CF(0) to CF(1). It either transmits conformational changes from CF(0) to CF(1) or is implicated in proton conduction. The chain is ATP synthase subunit delta from Ureaplasma parvum serovar 3 (strain ATCC 27815 / 27 / NCTC 11736).